Reading from the N-terminus, the 325-residue chain is Tagatose 1,6-diphosphate aldolase (325 aa).

It belongs to the aldolase LacD family.

The catalysed reaction is D-tagatofuranose 1,6-bisphosphate = D-glyceraldehyde 3-phosphate + dihydroxyacetone phosphate. The protein operates within carbohydrate metabolism; D-tagatose 6-phosphate degradation; D-glyceraldehyde 3-phosphate and glycerone phosphate from D-tagatose 6-phosphate: step 2/2. In Staphylococcus epidermidis (strain ATCC 35984 / DSM 28319 / BCRC 17069 / CCUG 31568 / BM 3577 / RP62A), this protein is Tagatose 1,6-diphosphate aldolase.